Here is a 480-residue protein sequence, read N- to C-terminus: Protein nucleotidyltransferase YdiU (480 aa).

ATP-binding residues include Gly-86, Gly-88, Arg-89, Lys-109, Asp-121, Gly-122, Arg-172, and Arg-179. Catalysis depends on Asp-248, which acts as the Proton acceptor. Mg(2+) contacts are provided by Asn-249 and Asp-258. Asp-258 lines the ATP pocket.

The protein belongs to the SELO family. The cofactor is Mg(2+). Mn(2+) is required as a cofactor.

The enzyme catalyses L-seryl-[protein] + ATP = 3-O-(5'-adenylyl)-L-seryl-[protein] + diphosphate. The catalysed reaction is L-threonyl-[protein] + ATP = 3-O-(5'-adenylyl)-L-threonyl-[protein] + diphosphate. It catalyses the reaction L-tyrosyl-[protein] + ATP = O-(5'-adenylyl)-L-tyrosyl-[protein] + diphosphate. It carries out the reaction L-histidyl-[protein] + UTP = N(tele)-(5'-uridylyl)-L-histidyl-[protein] + diphosphate. The enzyme catalyses L-seryl-[protein] + UTP = O-(5'-uridylyl)-L-seryl-[protein] + diphosphate. The catalysed reaction is L-tyrosyl-[protein] + UTP = O-(5'-uridylyl)-L-tyrosyl-[protein] + diphosphate. Nucleotidyltransferase involved in the post-translational modification of proteins. It can catalyze the addition of adenosine monophosphate (AMP) or uridine monophosphate (UMP) to a protein, resulting in modifications known as AMPylation and UMPylation. The sequence is that of Protein nucleotidyltransferase YdiU from Salmonella choleraesuis (strain SC-B67).